Here is a 172-residue protein sequence, read N- to C-terminus: Adenine phosphoribosyltransferase (172 aa).

The protein belongs to the purine/pyrimidine phosphoribosyltransferase family. As to quaternary structure, homodimer.

Its subcellular location is the cytoplasm. The catalysed reaction is AMP + diphosphate = 5-phospho-alpha-D-ribose 1-diphosphate + adenine. The protein operates within purine metabolism; AMP biosynthesis via salvage pathway; AMP from adenine: step 1/1. Its function is as follows. Catalyzes a salvage reaction resulting in the formation of AMP, that is energically less costly than de novo synthesis. In Picosynechococcus sp. (strain ATCC 27264 / PCC 7002 / PR-6) (Agmenellum quadruplicatum), this protein is Adenine phosphoribosyltransferase.